Reading from the N-terminus, the 67-residue chain is MAFAWKKNFSYSKYASICSQTVRQALKPEIKNEVKTHGDAEFLYTRWKNGAQEKTESYNSAKSADKE.

The protein belongs to the eukaryotic ATPase epsilon family. F-type ATPases have 2 components, CF(1) - the catalytic core - and CF(0) - the membrane proton channel. CF(1) has five subunits: alpha(3), beta(3), gamma(1), delta(1), epsilon(1). CF(0) seems to have nine subunits: a, b, c, d, e, f, g, F6 and 8 (or A6L).

Its subcellular location is the mitochondrion. It is found in the mitochondrion inner membrane. In terms of biological role, mitochondrial membrane ATP synthase (F(1)F(0) ATP synthase or Complex V) produces ATP from ADP in the presence of a proton gradient across the membrane which is generated by electron transport complexes of the respiratory chain. F-type ATPases consist of two structural domains, F(1) - containing the extramembraneous catalytic core, and F(0) - containing the membrane proton channel, linked together by a central stalk and a peripheral stalk. During catalysis, ATP synthesis in the catalytic domain of F(1) is coupled via a rotary mechanism of the central stalk subunits to proton translocation. Part of the complex F(1) domain and of the central stalk which is part of the complex rotary element. Rotation of the central stalk against the surrounding alpha(3)beta(3) subunits leads to hydrolysis of ATP in three separate catalytic sites on the beta subunits. The protein is Putative ATP synthase subunit epsilon, mitochondrial (atp15) of Schizosaccharomyces pombe (strain 972 / ATCC 24843) (Fission yeast).